Reading from the N-terminus, the 187-residue chain is Peptidyl-tRNA hydrolase (187 aa).

Tyrosine 15 is a binding site for tRNA. Histidine 20 acts as the Proton acceptor in catalysis. Residues phenylalanine 64, asparagine 66, and asparagine 112 each coordinate tRNA.

The protein belongs to the PTH family. As to quaternary structure, monomer.

The protein resides in the cytoplasm. It catalyses the reaction an N-acyl-L-alpha-aminoacyl-tRNA + H2O = an N-acyl-L-amino acid + a tRNA + H(+). Its function is as follows. Hydrolyzes ribosome-free peptidyl-tRNAs (with 1 or more amino acids incorporated), which drop off the ribosome during protein synthesis, or as a result of ribosome stalling. In terms of biological role, catalyzes the release of premature peptidyl moieties from peptidyl-tRNA molecules trapped in stalled 50S ribosomal subunits, and thus maintains levels of free tRNAs and 50S ribosomes. The chain is Peptidyl-tRNA hydrolase from Parabacteroides distasonis (strain ATCC 8503 / DSM 20701 / CIP 104284 / JCM 5825 / NCTC 11152).